The following is a 162-amino-acid chain: Autophagy-related protein 8 (162 aa).

A compositionally biased stretch (basic and acidic residues) spans 1-27 (MRSKFKDEHPFEKRKAEAERIRQKYSD). Residues 1–42 (MRSKFKDEHPFEKRKAEAERIRQKYSDRIPPSPHSPASRLIG) form a disordered region. Glycine 157 carries the Phosphatidylethanolamine amidated glycine lipid modification. Residues 158-162 (GFETA) constitute a propeptide, removed in mature form.

This sequence belongs to the ATG8 family.

It is found in the cytoplasmic vesicle. The protein resides in the autophagosome membrane. It localises to the vacuole membrane. In terms of biological role, ubiquitin-like modifier involved in autophagosome formation. With ATG4, mediates the delivery of the autophagosomes to the vacuole via the microtubule cytoskeleton. Required for selective autophagic degradation of the nucleus (nucleophagy) as well as for mitophagy which contributes to regulate mitochondrial quantity and quality by eliminating the mitochondria to a basal level to fulfill cellular energy requirements and preventing excess ROS production. Also participates in membrane fusion events that take place in the early secretory pathway. Also involved in endoplasmic reticulum-specific autophagic process and is essential for the survival of cells subjected to severe ER stress. The ATG8-PE conjugate mediates tethering between adjacent membranes and stimulates membrane hemifusion, leading to expansion of the autophagosomal membrane during autophagy. The protein is Autophagy-related protein 8 of Colletotrichum higginsianum (strain IMI 349063) (Crucifer anthracnose fungus).